The primary structure comprises 288 residues: Alpha/beta hydrolase domain-containing protein 17B (288 aa).

Catalysis depends on charge relay system residues Ser170, Asp235, and His264.

The protein belongs to the AB hydrolase superfamily. ABHD17 family. In terms of processing, palmitoylated on cysteine residues located in a cysteine cluster at the N-terminus which promotes membrane localization.

The protein localises to the cell membrane. Its subcellular location is the recycling endosome membrane. It localises to the cell projection. The protein resides in the dendritic spine. It is found in the postsynaptic density membrane. The catalysed reaction is S-hexadecanoyl-L-cysteinyl-[protein] + H2O = L-cysteinyl-[protein] + hexadecanoate + H(+). In terms of biological role, hydrolyzes fatty acids from S-acylated cysteine residues in proteins. This is Alpha/beta hydrolase domain-containing protein 17B from Xenopus tropicalis (Western clawed frog).